A 121-amino-acid polypeptide reads, in one-letter code: Small ribosomal subunit protein uS13 (121 aa).

Residues 93 to 121 (RGLPVRGQNSKNNARTRKGPRRTVANKKK) are disordered. Residues 106–121 (ARTRKGPRRTVANKKK) show a composition bias toward basic residues.

It belongs to the universal ribosomal protein uS13 family. As to quaternary structure, part of the 30S ribosomal subunit. Forms a loose heterodimer with protein S19. Forms two bridges to the 50S subunit in the 70S ribosome.

Its function is as follows. Located at the top of the head of the 30S subunit, it contacts several helices of the 16S rRNA. In the 70S ribosome it contacts the 23S rRNA (bridge B1a) and protein L5 of the 50S subunit (bridge B1b), connecting the 2 subunits; these bridges are implicated in subunit movement. Contacts the tRNAs in the A and P-sites. The protein is Small ribosomal subunit protein uS13 of Bacillus subtilis (strain 168).